The primary structure comprises 139 residues: Large ribosomal subunit protein bL17 (139 aa).

Belongs to the bacterial ribosomal protein bL17 family. As to quaternary structure, part of the 50S ribosomal subunit. Contacts protein L32.

This chain is Large ribosomal subunit protein bL17, found in Azorhizobium caulinodans (strain ATCC 43989 / DSM 5975 / JCM 20966 / LMG 6465 / NBRC 14845 / NCIMB 13405 / ORS 571).